Reading from the N-terminus, the 872-residue chain is Cellulose synthase catalytic subunit [UDP-forming] (872 aa).

The next 4 helical transmembrane spans lie at 30 to 50 (SAFS…FIPL), 151 to 171 (ILGI…TQPF), 173 to 193 (PLAQ…VRRM), and 230 to 250 (LVCG…LVLG). The tract at residues 271-364 (LWPSVDIFVP…FVSIFDCDHV (94 aa)) is catalytic subdomain A. Residue Asp-313 is part of the active site. Substrate is bound by residues Asp-360 and Asp-362. A catalytic subdomain B region spans residues 441 to 501 (KPLDEIGGIA…GQRIRWARGM (61 aa)). Asp-457 is an active-site residue. 5 consecutive transmembrane segments (helical) span residues 525-545 (VNAM…TAPL), 547-567 (FLLL…LFVL), 592-612 (IYET…LINP), 640-660 (IFLV…YFYG), and 668-688 (VVVS…AVAV). Residues 694–790 (QVRRSHRVEM…QHIDFVQCTF (97 aa)) form the PilZ domain. The helical transmembrane segment at 833-853 (SVKGIFRVLTSLVSWVVSFIP) threads the bilayer.

Belongs to the glycosyltransferase 2 family. Requires Mg(2+) as cofactor.

It localises to the cell inner membrane. The catalysed reaction is [(1-&gt;4)-beta-D-glucosyl](n) + UDP-alpha-D-glucose = [(1-&gt;4)-beta-D-glucosyl](n+1) + UDP + H(+). It functions in the pathway glycan metabolism; bacterial cellulose biosynthesis. Its activity is regulated as follows. Activated by bis-(3'-5') cyclic diguanylic acid (c-di-GMP). Its function is as follows. Catalytic subunit of cellulose synthase. It polymerizes uridine 5'-diphosphate glucose to cellulose, which is produced as an extracellular component for mechanical and chemical protection at the onset of the stationary phase, when the cells exhibit multicellular behavior (rdar morphotype). Coexpression of cellulose and thin aggregative fimbriae (curli fimbrae or fibers) leads to a hydrophobic network with tightly packed cells embedded in a highly inert matrix that confers cohesion, elasticity and tissue-like properties to colonies. The polypeptide is Cellulose synthase catalytic subunit [UDP-forming] (bcsA) (Escherichia coli (strain K12)).